Reading from the N-terminus, the 406-residue chain is 8-amino-7-oxononanoate synthase (406 aa).

Arg20 is a binding site for substrate. 116-117 (GY) lines the pyridoxal 5'-phosphate pocket. His141 is a binding site for substrate. 3 residues coordinate pyridoxal 5'-phosphate: Ser187, His215, and Thr243. Lys246 is modified (N6-(pyridoxal phosphate)lysine). Residue Thr366 coordinates substrate.

This sequence belongs to the class-II pyridoxal-phosphate-dependent aminotransferase family. BioF subfamily. Homodimer. Pyridoxal 5'-phosphate serves as cofactor.

It carries out the reaction 6-carboxyhexanoyl-[ACP] + L-alanine + H(+) = (8S)-8-amino-7-oxononanoate + holo-[ACP] + CO2. Its pathway is cofactor biosynthesis; biotin biosynthesis. Catalyzes the decarboxylative condensation of pimeloyl-[acyl-carrier protein] and L-alanine to produce 8-amino-7-oxononanoate (AON), [acyl-carrier protein], and carbon dioxide. In Cupriavidus metallidurans (strain ATCC 43123 / DSM 2839 / NBRC 102507 / CH34) (Ralstonia metallidurans), this protein is 8-amino-7-oxononanoate synthase.